Reading from the N-terminus, the 415-residue chain is Methylmalonic aciduria type A homolog, mitochondrial (415 aa).

The N-terminal 62 residues, 1–62 (MTISTLLLSP…LLSDGFRRTL (62 aa)), are a transit peptide targeting the mitochondrion. GTP is bound by residues 147 to 155 (GPPGAGKST), aspartate 289, and 325 to 327 (SAR).

The protein belongs to the SIMIBI class G3E GTPase family. ArgK/MeaB subfamily. As to quaternary structure, homodimer. Interacts with MMUT (the apoenzyme form); the interaction is GTP dependent.

The protein localises to the mitochondrion. It localises to the cytoplasm. The enzyme catalyses GTP + H2O = GDP + phosphate + H(+). With respect to regulation, GTPase activity is stimulated by MMUT. Functionally, GTPase, binds and hydrolyzes GTP. Involved in intracellular vitamin B12 metabolism, mediates the transport of cobalamin (Cbl) into mitochondria for the final steps of adenosylcobalamin (AdoCbl) synthesis. Functions as a G-protein chaperone that assists AdoCbl cofactor delivery from MMAB to the methylmalonyl-CoA mutase (MMUT). Plays a dual role as both a protectase and a reactivase for MMUT. Protects MMUT from progressive inactivation by oxidation by decreasing the rate of the formation of the oxidized inactive cofactor hydroxocobalamin (OH2Cbl). Additionally acts a reactivase by promoting the replacement of OH2Cbl by the active cofactor AdoCbl, restoring the activity of MMUT in the presence and hydrolysis of GTP. This chain is Methylmalonic aciduria type A homolog, mitochondrial, found in Mus musculus (Mouse).